The primary structure comprises 105 residues: uncharacterized protein (105 aa).

The protein localises to the mitochondrion. This is an uncharacterized protein from Paramecium tetraurelia.